The primary structure comprises 185 residues: Threonylcarbamoyl-AMP synthase (185 aa).

Positions 4–185 (SWRVQQAAQN…IATGQVMRAG (182 aa)) constitute a YrdC-like domain.

It belongs to the SUA5 family. TsaC subfamily.

It localises to the cytoplasm. The catalysed reaction is L-threonine + hydrogencarbonate + ATP = L-threonylcarbamoyladenylate + diphosphate + H2O. Functionally, required for the formation of a threonylcarbamoyl group on adenosine at position 37 (t(6)A37) in tRNAs that read codons beginning with adenine. Catalyzes the conversion of L-threonine, HCO(3)(-)/CO(2) and ATP to give threonylcarbamoyl-AMP (TC-AMP) as the acyladenylate intermediate, with the release of diphosphate. This chain is Threonylcarbamoyl-AMP synthase, found in Pseudomonas syringae pv. tomato (strain ATCC BAA-871 / DC3000).